The following is a 421-amino-acid chain: D-amino acid dehydrogenase (421 aa).

3–17 (VIVLGSGVIGVASAY) lines the FAD pocket.

This sequence belongs to the DadA oxidoreductase family. It depends on FAD as a cofactor.

It catalyses the reaction a D-alpha-amino acid + A + H2O = a 2-oxocarboxylate + AH2 + NH4(+). Its pathway is amino-acid degradation; D-alanine degradation; NH(3) and pyruvate from D-alanine: step 1/1. Functionally, oxidative deamination of D-amino acids. This is D-amino acid dehydrogenase from Acinetobacter baumannii (strain ATCC 17978 / DSM 105126 / CIP 53.77 / LMG 1025 / NCDC KC755 / 5377).